We begin with the raw amino-acid sequence, 352 residues long: Biotin synthase (352 aa).

The Radical SAM core domain occupies 44 to 262; it reads NRVQVSTLLS…LAVARILMPK (219 aa). [4Fe-4S] cluster is bound by residues Cys-59, Cys-63, and Cys-66. Residues Cys-103, Cys-134, Cys-194, and Arg-266 each contribute to the [2Fe-2S] cluster site.

The protein belongs to the radical SAM superfamily. Biotin synthase family. Homodimer. Requires [4Fe-4S] cluster as cofactor. The cofactor is [2Fe-2S] cluster.

The enzyme catalyses (4R,5S)-dethiobiotin + (sulfur carrier)-SH + 2 reduced [2Fe-2S]-[ferredoxin] + 2 S-adenosyl-L-methionine = (sulfur carrier)-H + biotin + 2 5'-deoxyadenosine + 2 L-methionine + 2 oxidized [2Fe-2S]-[ferredoxin]. It participates in cofactor biosynthesis; biotin biosynthesis; biotin from 7,8-diaminononanoate: step 2/2. Functionally, catalyzes the conversion of dethiobiotin (DTB) to biotin by the insertion of a sulfur atom into dethiobiotin via a radical-based mechanism. The sequence is that of Biotin synthase from Pseudomonas syringae pv. syringae (strain B728a).